Consider the following 468-residue polypeptide: Glutamate--tRNA ligase 2 (468 aa).

The 'HIGH' region signature appears at 9–19; that stretch reads PSPTGHLHIGG. Cys-98, Cys-100, Cys-125, and His-127 together coordinate Zn(2+). The 'KMSKS' region signature appears at 236 to 240; that stretch reads RLSKR. Lys-239 lines the ATP pocket.

This sequence belongs to the class-I aminoacyl-tRNA synthetase family. Glutamate--tRNA ligase type 1 subfamily. Monomer. Zn(2+) is required as a cofactor.

It localises to the cytoplasm. The catalysed reaction is tRNA(Glu) + L-glutamate + ATP = L-glutamyl-tRNA(Glu) + AMP + diphosphate. Functionally, catalyzes the attachment of glutamate to tRNA(Glu) in a two-step reaction: glutamate is first activated by ATP to form Glu-AMP and then transferred to the acceptor end of tRNA(Glu). The sequence is that of Glutamate--tRNA ligase 2 from Methylococcus capsulatus (strain ATCC 33009 / NCIMB 11132 / Bath).